The chain runs to 151 residues: Cell division protein SepF (151 aa).

Belongs to the SepF family. In terms of assembly, homodimer. Interacts with FtsZ.

The protein resides in the cytoplasm. In terms of biological role, cell division protein that is part of the divisome complex and is recruited early to the Z-ring. Probably stimulates Z-ring formation, perhaps through the cross-linking of FtsZ protofilaments. Its function overlaps with FtsA. The protein is Cell division protein SepF of Desulfitobacterium hafniense (strain Y51).